We begin with the raw amino-acid sequence, 392 residues long: 26S proteasome regulatory subunit 8 homolog (392 aa).

An ATP-binding site is contributed by 176-183; sequence GPPGTGKT.

The protein belongs to the AAA ATPase family. The 26S proteasome consists of a 20S proteasome core and two 19S regulatory subunits. The 20S proteasome core is composed of 28 subunits that are arranged in four stacked rings, resulting in a barrel-shaped structure. The two end rings are each formed by seven alpha subunits, and the two central rings are each formed by seven beta subunits. The catalytic chamber with the active sites is on the inside of the barrel.

It is found in the cytoplasm. It localises to the nucleus. Functionally, acts as a regulatory subunit of the 26S proteasome which degrades poly-ubiquitinated proteins in the cytoplasm and in the nucleus. It is essential for the regulated turnover of proteins and for the removal of misfolded proteins. The proteasome is a multicatalytic proteinase complex that is characterized by its ability to cleave peptides with Arg, Phe, Tyr, Leu, and Glu adjacent to the leaving group at neutral or slightly basic pH. The sequence is that of 26S proteasome regulatory subunit 8 homolog (RPT6) from Encephalitozoon cuniculi (strain GB-M1) (Microsporidian parasite).